The primary structure comprises 514 residues: MGAATKLAFAVFLISCSSAGSILGRSETKECIYYNANWEKDKTNSNGTEICYGDNDKRKHCFATWKNISGSIEIVKQGCWLDDINCYNKSKCTEKKDSPDVFFCCCEGNYCNEKFYHSPEMEVTQPTSNPVTTKPPLFNTLLYSLVPIMVVAVIVLFSFWMYRHHKLAYPPVLVPTQDPGPPPPSPLLGLKPLQLLEVKARGRFGCVWKAQLLNETVAVKIFPVQDKLSWQNEYEIYSLPGMKHENILYFIGAEKRGTNLDTDLWLITAFHEKGSLTDYLKANVVSWNELCLIAETMARGLSHLHEDIPGLKDGHKPAVAHRDIKSKNVLLKNNLTACIADFGLALKFEAGKSAGDTHGQVGTRRYMAPEVLEGAINFQRDAFLRIDMYAFGLVLWELASRCTASDGPVDEYMLPFEEEVGQHPSLEDMQEVVVHKKKRPILRECWQKHAGMAMLCETIEECWDHDAEARLSAGCVEERIIQMQKLTNIITTEDIVTVVTMVTNVDFPPKESSL.

An N-terminal signal peptide occupies residues 1-20 (MGAATKLAFAVFLISCSSAG). Over 21-136 (SILGRSETKE…TSNPVTTKPP (116 aa)) the chain is Extracellular. Cystine bridges form between cysteine 31–cysteine 61, cysteine 51–cysteine 79, cysteine 86–cysteine 105, cysteine 92–cysteine 104, and cysteine 106–cysteine 111. Asparagine 46, asparagine 67, and asparagine 88 each carry an N-linked (GlcNAc...) asparagine glycan. A helical transmembrane segment spans residues 137–162 (LFNTLLYSLVPIMVVAVIVLFSFWMY). The Cytoplasmic portion of the chain corresponds to 163–514 (RHHKLAYPPV…VDFPPKESSL (352 aa)). In terms of domain architecture, Protein kinase spans 193 to 486 (LQLLEVKARG…EERIIQMQKL (294 aa)). Residues 199–207 (KARGRFGCV) and lysine 220 contribute to the ATP site. Aspartate 323 functions as the Proton acceptor in the catalytic mechanism.

It belongs to the protein kinase superfamily. TKL Ser/Thr protein kinase family. TGFB receptor subfamily.

The protein localises to the cell membrane. It carries out the reaction L-threonyl-[receptor-protein] + ATP = O-phospho-L-threonyl-[receptor-protein] + ADP + H(+). The enzyme catalyses L-seryl-[receptor-protein] + ATP = O-phospho-L-seryl-[receptor-protein] + ADP + H(+). Receptor for activin A, activin B and inhibin A. Involved in transmembrane signaling. This is Activin receptor type-2A (acvr2a) from Xenopus laevis (African clawed frog).